We begin with the raw amino-acid sequence, 337 residues long: Phenylalanine--tRNA ligase alpha subunit (337 aa).

Glutamate 258 is a binding site for Mg(2+).

This sequence belongs to the class-II aminoacyl-tRNA synthetase family. Phe-tRNA synthetase alpha subunit type 1 subfamily. In terms of assembly, tetramer of two alpha and two beta subunits. Mg(2+) is required as a cofactor.

It localises to the cytoplasm. The catalysed reaction is tRNA(Phe) + L-phenylalanine + ATP = L-phenylalanyl-tRNA(Phe) + AMP + diphosphate + H(+). The chain is Phenylalanine--tRNA ligase alpha subunit from Burkholderia mallei (strain ATCC 23344).